A 186-amino-acid chain; its full sequence is Elongation factor P (186 aa).

This sequence belongs to the elongation factor P family.

It is found in the cytoplasm. It functions in the pathway protein biosynthesis; polypeptide chain elongation. Involved in peptide bond synthesis. Stimulates efficient translation and peptide-bond synthesis on native or reconstituted 70S ribosomes in vitro. Probably functions indirectly by altering the affinity of the ribosome for aminoacyl-tRNA, thus increasing their reactivity as acceptors for peptidyl transferase. The polypeptide is Elongation factor P (Neisseria gonorrhoeae (strain NCCP11945)).